We begin with the raw amino-acid sequence, 236 residues long: Pyridoxine 5'-phosphate synthase (236 aa).

Asn7 provides a ligand contact to 3-amino-2-oxopropyl phosphate. 9–10 (DH) provides a ligand contact to 1-deoxy-D-xylulose 5-phosphate. Arg18 provides a ligand contact to 3-amino-2-oxopropyl phosphate. The Proton acceptor role is filled by His43. 2 residues coordinate 1-deoxy-D-xylulose 5-phosphate: Arg45 and His50. Glu69 acts as the Proton acceptor in catalysis. Thr99 provides a ligand contact to 1-deoxy-D-xylulose 5-phosphate. Residue His190 is the Proton donor of the active site. 3-amino-2-oxopropyl phosphate contacts are provided by residues Gly191 and 212–213 (GH).

The protein belongs to the PNP synthase family. Homooctamer; tetramer of dimers.

It is found in the cytoplasm. The enzyme catalyses 3-amino-2-oxopropyl phosphate + 1-deoxy-D-xylulose 5-phosphate = pyridoxine 5'-phosphate + phosphate + 2 H2O + H(+). The protein operates within cofactor biosynthesis; pyridoxine 5'-phosphate biosynthesis; pyridoxine 5'-phosphate from D-erythrose 4-phosphate: step 5/5. Its function is as follows. Catalyzes the complicated ring closure reaction between the two acyclic compounds 1-deoxy-D-xylulose-5-phosphate (DXP) and 3-amino-2-oxopropyl phosphate (1-amino-acetone-3-phosphate or AAP) to form pyridoxine 5'-phosphate (PNP) and inorganic phosphate. The sequence is that of Pyridoxine 5'-phosphate synthase from Desulfosudis oleivorans (strain DSM 6200 / JCM 39069 / Hxd3) (Desulfococcus oleovorans).